We begin with the raw amino-acid sequence, 146 residues long: 3-hydroxyacyl-[acyl-carrier-protein] dehydratase FabZ (146 aa).

The active site involves His48.

Belongs to the thioester dehydratase family. FabZ subfamily.

Its subcellular location is the cytoplasm. It carries out the reaction a (3R)-hydroxyacyl-[ACP] = a (2E)-enoyl-[ACP] + H2O. Its function is as follows. Involved in unsaturated fatty acids biosynthesis. Catalyzes the dehydration of short chain beta-hydroxyacyl-ACPs and long chain saturated and unsaturated beta-hydroxyacyl-ACPs. The protein is 3-hydroxyacyl-[acyl-carrier-protein] dehydratase FabZ of Campylobacter lari (strain RM2100 / D67 / ATCC BAA-1060).